A 1044-amino-acid chain; its full sequence is Translation initiation factor IF-2 (1044 aa).

The disordered stretch occupies residues 55–458 (EAQEGQGAGK…KRKASAQERR (404 aa)). Positions 57–77 (QEGQGAGKSAAKSAKPAAQPK) are enriched in low complexity. Residues 104–146 (LSEKRERRPLTERRPLAERRPLAERPLVDRPVTERPLAERPAA) are compositionally biased toward basic and acidic residues. Composition is skewed to low complexity over residues 147-168 (ELRP…AQPV), 190-231 (KAQP…QKPA), and 254-265 (ASSRPASAAPAA). Positions 267–281 (GEKRPAAAAERREEP) are enriched in basic and acidic residues. Composition is skewed to low complexity over residues 352-375 (AAGQ…AGAP) and 383-395 (APQR…APLA). Residues 399 to 444 (LDPKVAEQAKAGEGKPRYGQSGDKRRADLYDRREHPSSQPSEEKLF) are compositionally biased toward basic and acidic residues. One can recognise a tr-type G domain in the interval 546 to 714 (PRHPVVTIMG…ILVLAEVSDL (169 aa)). Residues 555–562 (GHVDHGKT) are G1. 555-562 (GHVDHGKT) provides a ligand contact to GTP. Positions 580–584 (GITQH) are G2. Positions 601–604 (DTPG) are G3. Residues 601–605 (DTPGH) and 655–658 (NKID) each bind GTP. A G4 region spans residues 655 to 658 (NKID). The tract at residues 691-693 (SAK) is G5.

This sequence belongs to the TRAFAC class translation factor GTPase superfamily. Classic translation factor GTPase family. IF-2 subfamily.

It localises to the cytoplasm. Functionally, one of the essential components for the initiation of protein synthesis. Protects formylmethionyl-tRNA from spontaneous hydrolysis and promotes its binding to the 30S ribosomal subunits. Also involved in the hydrolysis of GTP during the formation of the 70S ribosomal complex. The polypeptide is Translation initiation factor IF-2 (Symbiobacterium thermophilum (strain DSM 24528 / JCM 14929 / IAM 14863 / T)).